The primary structure comprises 232 residues: Cytidylate kinase (232 aa).

19-27 (GPAGVGKTT) contributes to the ATP binding site.

This sequence belongs to the cytidylate kinase family. Type 1 subfamily.

It is found in the cytoplasm. The catalysed reaction is CMP + ATP = CDP + ADP. The enzyme catalyses dCMP + ATP = dCDP + ADP. The protein is Cytidylate kinase of Nitratidesulfovibrio vulgaris (strain ATCC 29579 / DSM 644 / CCUG 34227 / NCIMB 8303 / VKM B-1760 / Hildenborough) (Desulfovibrio vulgaris).